A 1594-amino-acid chain; its full sequence is Mediator of RNA polymerase II transcription subunit 12 (1594 aa).

Disordered regions lie at residues 1–116 (MIPH…LSWR) and 1499–1532 (PSPAAGGSTPTPTPSSALPGAPSNPQPTAMTPAV). Composition is skewed to low complexity over residues 81–93 (PAAPSARDASPAP) and 1499–1521 (PSPAAGGSTPTPTPSSALPGAPS).

Belongs to the Mediator complex subunit 12 family. In terms of assembly, component of the srb8-11 complex, which itself associates with the Mediator complex.

The protein localises to the nucleus. Its function is as follows. Component of the srb8-11 complex. The srb8-11 complex is a regulatory module of the Mediator complex which is itself involved in regulation of basal and activated RNA polymerase II-dependent transcription. The srb8-11 complex may be involved in the transcriptional repression of a subset of genes regulated by Mediator. It may inhibit the association of the Mediator complex with RNA polymerase II to form the holoenzyme complex. This Aspergillus oryzae (strain ATCC 42149 / RIB 40) (Yellow koji mold) protein is Mediator of RNA polymerase II transcription subunit 12 (srb8).